The primary structure comprises 287 residues: Polyamine aminopropyltransferase (287 aa).

The PABS domain maps to 5–238 (EIWYETLHAN…GIMTFAWASN (234 aa)). Position 33 (glutamine 33) interacts with S-methyl-5'-thioadenosine. Spermidine is bound by residues histidine 64 and aspartate 88. Residues glutamate 108 and 140-141 (DG) each bind S-methyl-5'-thioadenosine. The active-site Proton acceptor is the aspartate 158. 158 to 161 (DCTD) contributes to the spermidine binding site. Proline 165 lines the S-methyl-5'-thioadenosine pocket.

The protein belongs to the spermidine/spermine synthase family. In terms of assembly, homodimer or homotetramer.

The protein localises to the cytoplasm. The catalysed reaction is S-adenosyl 3-(methylsulfanyl)propylamine + putrescine = S-methyl-5'-thioadenosine + spermidine + H(+). It functions in the pathway amine and polyamine biosynthesis; spermidine biosynthesis; spermidine from putrescine: step 1/1. Functionally, catalyzes the irreversible transfer of a propylamine group from the amino donor S-adenosylmethioninamine (decarboxy-AdoMet) to putrescine (1,4-diaminobutane) to yield spermidine. The protein is Polyamine aminopropyltransferase of Pectobacterium carotovorum subsp. carotovorum (strain PC1).